The following is a 400-amino-acid chain: Phosphoglycerate kinase (400 aa).

Residues aspartate 22–asparagine 24, arginine 38, histidine 61–arginine 64, arginine 119, and arginine 152 contribute to the substrate site. ATP-binding positions include lysine 205, glycine 296, glutamate 327, and glycine 353–threonine 356.

The protein belongs to the phosphoglycerate kinase family. Monomer.

Its subcellular location is the cytoplasm. The enzyme catalyses (2R)-3-phosphoglycerate + ATP = (2R)-3-phospho-glyceroyl phosphate + ADP. Its pathway is carbohydrate degradation; glycolysis; pyruvate from D-glyceraldehyde 3-phosphate: step 2/5. This Campylobacter jejuni subsp. jejuni serotype O:2 (strain ATCC 700819 / NCTC 11168) protein is Phosphoglycerate kinase.